Reading from the N-terminus, the 346-residue chain is Protein RecA (346 aa).

79–86 (GPESSGKT) lines the ATP pocket.

This sequence belongs to the RecA family.

The protein localises to the cytoplasm. Its function is as follows. Can catalyze the hydrolysis of ATP in the presence of single-stranded DNA, the ATP-dependent uptake of single-stranded DNA by duplex DNA, and the ATP-dependent hybridization of homologous single-stranded DNAs. It interacts with LexA causing its activation and leading to its autocatalytic cleavage. In Chlorobaculum tepidum (strain ATCC 49652 / DSM 12025 / NBRC 103806 / TLS) (Chlorobium tepidum), this protein is Protein RecA.